A 351-amino-acid chain; its full sequence is Uroporphyrinogen decarboxylase (351 aa).

Substrate-binding positions include 25 to 29 (RQAGR), aspartate 74, tyrosine 151, serine 206, and histidine 325.

This sequence belongs to the uroporphyrinogen decarboxylase family. Homodimer.

The protein resides in the cytoplasm. It carries out the reaction uroporphyrinogen III + 4 H(+) = coproporphyrinogen III + 4 CO2. It functions in the pathway porphyrin-containing compound metabolism; protoporphyrin-IX biosynthesis; coproporphyrinogen-III from 5-aminolevulinate: step 4/4. Catalyzes the decarboxylation of four acetate groups of uroporphyrinogen-III to yield coproporphyrinogen-III. This is Uroporphyrinogen decarboxylase from Chlorobium phaeovibrioides (strain DSM 265 / 1930) (Prosthecochloris vibrioformis (strain DSM 265)).